The sequence spans 37 residues: Beta-2-microglobulin (37 aa).

The Ig-like C1-type domain occupies 11–37; sequence GKEDVLICHVSNFHPPDITITLLKNGE.

It belongs to the beta-2-microglobulin family. In terms of assembly, heterodimer of an alpha chain and a beta chain. Beta-2-microglobulin is the beta-chain of major histocompatibility complex class I molecules.

The protein resides in the secreted. In terms of biological role, component of the class I major histocompatibility complex (MHC). Involved in the presentation of peptide antigens to the immune system. This is Beta-2-microglobulin (b2m) from Oreochromis niloticus (Nile tilapia).